The chain runs to 197 residues: A-type ATP synthase subunit E 2 (197 aa).

Belongs to the V-ATPase E subunit family. Has multiple subunits with at least A(3), B(3), C, D, E, F, H, I and proteolipid K(x).

It localises to the cell membrane. In terms of biological role, component of the A-type ATP synthase that produces ATP from ADP in the presence of a proton gradient across the membrane. The polypeptide is A-type ATP synthase subunit E 2 (Methanospirillum hungatei JF-1 (strain ATCC 27890 / DSM 864 / NBRC 100397 / JF-1)).